The primary structure comprises 359 residues: Tryptophan 2,3-dioxygenase (359 aa).

Substrate is bound by residues 38-42 and Arg109; that span reads FIIVH. A heme-binding site is contributed by His295. Thr309 is a substrate binding site.

It belongs to the tryptophan 2,3-dioxygenase family. In terms of assembly, homotetramer. It depends on heme as a cofactor.

It carries out the reaction L-tryptophan + O2 = N-formyl-L-kynurenine. Its pathway is amino-acid degradation; L-tryptophan degradation via kynurenine pathway; L-kynurenine from L-tryptophan: step 1/2. Heme-dependent dioxygenase that catalyzes the oxidative cleavage of the L-tryptophan (L-Trp) pyrrole ring and converts L-tryptophan to N-formyl-L-kynurenine. Catalyzes the oxidative cleavage of the indole moiety. This Bdellovibrio bacteriovorus (strain ATCC 15356 / DSM 50701 / NCIMB 9529 / HD100) protein is Tryptophan 2,3-dioxygenase.